Reading from the N-terminus, the 940-residue chain is Chordin (940 aa).

The N-terminal stretch at 1-19 is a signal peptide; it reads MMEGLLWILLSVIIASVHG. In terms of domain architecture, VWFC 1 spans 42 to 118; that stretch reads SGCSFGGRFY…LPGHCCKTCP (77 aa). CHRD domains are found at residues 162–277, 279–398, 404–519, and 525–652; these read TTTD…KHRA, FAET…GRRS, SVLS…LLPY, and RRNE…VPNH. 2 N-linked (GlcNAc...) asparagine glycosylation sites follow: N347 and N430. VWFC domains are found at residues 689 to 748, 767 to 836, and 855 to 919; these read HSCF…PICE, EGCY…KECP, and RLCK…PECI.

Belongs to the chordin family. In terms of assembly, interacts with twsg1 and/or bmp4. In terms of processing, cleaved by tolloid proteases; cleavage participates in dorsoventral patterning during early development.

It localises to the secreted. Dorsalizing factor. Key developmental protein that dorsalizes early vertebrate embryonic tissues by binding to ventralizing TGF-beta family bone morphogenetic proteins (BMPs) and sequestering them in latent complexes. The protein is Chordin (chd) of Danio rerio (Zebrafish).